We begin with the raw amino-acid sequence, 1080 residues long: Adenylate cyclase type 7 (1080 aa).

At 1-33 the chain is on the cytoplasmic side; that stretch reads MPAKGRYFLNEGEEGPDQDALYEKYQLTSQHGP. Transmembrane regions (helical) follow at residues 34–54, 63–83, 95–117, 122–142, 147–167, and 176–196; these read LLLTLLLVAATACVALIIIAF, QAILGMAFLVLAVFAALSVLM, ALALLTWACLVALGYVLVFDAWT, AWEQVPFFLFIVFVVYTLLPF, AVAVGAVSTASHLLVLGSLMG, and VGLQLLANAVIFLCGNLTGAF. The Cytoplasmic segment spans residues 197-594; it reads HKHQMQDASR…YRLAPIPRAR (398 aa). The Guanylate cyclase 1 domain maps to 279-406; the sequence is SILYADIVGF…HDVSLANRME (128 aa). Positions 284, 285, and 328 each coordinate Mg(2+). ATP contacts are provided by residues 284 to 289, 326 to 328, and Arg372; these read DIVGFT and LGD. Residues 454–474 are disordered; that stretch reads DPRSQQPPPPSQHLPRPKGDA. The tract at residues 477–482 is mediates regulation of adenylate cyclase activity by C5 alpha-induced G- beta and gamma pathway; that stretch reads KMRASV. The mediates regulation of adenylate cyclase activity by sphingosine 1-phosphate-induced G alpha 13 pathway stretch occupies residues 491–499; the sequence is WGAARPFAH. Residues 504-546 form a disordered region; sequence ESVSSGETHVPNGRRPKSVPQRHRRTPDRSMSPKGRSEDDSYD. Positions 506-584 are modulates adenylate cyclase activity by modulating the binding of G(s)alpha to the high-affinity G(s)alpha binding site in 7C1a/7C2; it reads VSSGETHVPN…IFLEKGFERE (79 aa). Over residues 515-529 the composition is skewed to basic residues; sequence NGRRPKSVPQRHRRT. The next 3 membrane-spanning stretches (helical) occupy residues 595–615, 620–640, and 669–688; these read HDFACASLIFVCILLVHVLLM, ALGVSFGLVACVLGLVLGLCF, and LTLAVLTIGSLLTVAIINLP. N-linked (GlcNAc...) asparagine glycosylation is present at Asn701. Transmembrane regions (helical) follow at residues 718-737 and 746-773; these read PLPYYTCSCVLGFIACSVFL and VLLTVALVAYLVLFNLSPCWQWDCCGQG. N-linked (GlcNAc...) asparagine glycans are attached at residues Asn776 and Asn781. A helical membrane pass occupies residues 794–814; sequence DLKTMTNFYLVLFYITLLTLS. The Cytoplasmic portion of the chain corresponds to 815-1080; sequence RQIDYYCRLD…TAKFQGLGLN (266 aa). In terms of domain architecture, Guanylate cyclase 2 spans 879-1023; that stretch reads CVMFASVPDF…NTVNVASRME (145 aa). Residues Lys931, 1010–1012, 1017–1021, and Lys1057 each bind ATP; these read DIW and NVASR.

The protein belongs to the adenylyl cyclase class-4/guanylyl cyclase family. The cofactor is Mg(2+). Mn(2+) serves as cofactor. Phosphorylated by PRKCD.

The protein localises to the membrane. The catalysed reaction is ATP = 3',5'-cyclic AMP + diphosphate. Activated by the G protein alpha subunit. Activated by the G protein beta and gamma subunit complex. Activated by GNA13 and GNA12. Ethanol and phorbol 12,13-dibutanoate significantly potentiate adenylate cyclase activity generated in response to the activation of the prostanoid receptor by the agonist prostaglandin E1(1-) in a PKC-dependent manner. Inhibited by lithium. Functionally, catalyzes the formation of cAMP in response to activation of G protein-coupled receptors. Functions in signaling cascades activated namely by thrombin and sphingosine 1-phosphate and mediates regulation of cAMP synthesis through synergistic action of the stimulatory G alpha protein with GNA13. Also, during inflammation, mediates zymosan-induced increase intracellular cAMP, leading to protein kinase A pathway activation in order to modulate innate immune responses through heterotrimeric G proteins G(12/13). Functions in signaling cascades activated namely by dopamine and C5 alpha chain and mediates regulation of cAMP synthesis through synergistic action of the stimulatory G protein with G beta:gamma complex. Functions, through cAMP response regulation, to keep inflammation under control during bacterial infection by sensing the presence of serum factors, such as the bioactive lysophospholipid (LPA) that regulate LPS-induced TNF-alpha production. However, it is also required for the optimal functions of B and T cells during adaptive immune responses by regulating cAMP synthesis in both B and T cells. The chain is Adenylate cyclase type 7 from Homo sapiens (Human).